Consider the following 205-residue polypeptide: Probable calcium-binding protein CML41 (205 aa).

Positions 26–55 (SFQNRRRSPKSNSSSTLNSPRSNSDDNNNI) are disordered. Over residues 35-54 (KSNSSSTLNSPRSNSDDNNN) the composition is skewed to low complexity. EF-hand domains lie at 60–95 (ASKE…VGEY), 96–131 (ISHE…RDLY), 137–173 (DGDG…LGES), and 174–205 (RTYG…MMTV). Residues D73, D75, D77, K79, E84, D109, D111, D113, S115, and D120 each contribute to the Ca(2+) site. Residues D187, D189, N191, and E198 each contribute to the Ca(2+) site.

Functionally, potential calcium sensor. In Arabidopsis thaliana (Mouse-ear cress), this protein is Probable calcium-binding protein CML41 (CML41).